A 265-amino-acid polypeptide reads, in one-letter code: Tryptophan synthase alpha chain (265 aa).

Active-site proton acceptor residues include E48 and D59.

Belongs to the TrpA family. Tetramer of two alpha and two beta chains.

It catalyses the reaction (1S,2R)-1-C-(indol-3-yl)glycerol 3-phosphate + L-serine = D-glyceraldehyde 3-phosphate + L-tryptophan + H2O. It participates in amino-acid biosynthesis; L-tryptophan biosynthesis; L-tryptophan from chorismate: step 5/5. Its function is as follows. The alpha subunit is responsible for the aldol cleavage of indoleglycerol phosphate to indole and glyceraldehyde 3-phosphate. In Ruthia magnifica subsp. Calyptogena magnifica, this protein is Tryptophan synthase alpha chain.